The following is a 1476-amino-acid chain: Glucosyltransferase-I (1476 aa).

Residues methionine 1–glycine 34 form the signal peptide. Disordered regions lie at residues glutamate 42–serine 89 and proline 102–aspartate 141. 2 stretches are compositionally biased toward polar residues: residues serine 43 to histidine 81 and proline 102 to glutamate 139. 2 Cell wall-binding repeats span residues leucine 159–valine 178 and arginine 179–tyrosine 199. Residues threonine 200–lysine 1051 are catalytic; approximate. Cell wall-binding repeat units lie at residues lysine 1087 to methionine 1106, valine 1107 to glutamine 1126, serine 1170 to glutamine 1189, arginine 1214 to alanine 1234, valine 1235 to glutamine 1254, arginine 1279 to alanine 1299, valine 1300 to glutamine 1319, arginine 1344 to alanine 1364, valine 1365 to glutamine 1384, arginine 1409 to alanine 1429, and valine 1430 to glutamine 1449.

It belongs to the glycosyl hydrolase 70 family.

The protein resides in the secreted. It carries out the reaction [(1-&gt;6)-alpha-D-glucosyl](n) + sucrose = [(1-&gt;6)-alpha-D-glucosyl](n+1) + D-fructose. Its function is as follows. Production of extracellular glucans, that are thought to play a key role in the development of the dental plaque because of their ability to adhere to smooth surfaces and mediate the aggregation of bacterial cells and food debris. The polypeptide is Glucosyltransferase-I (gtfB) (Streptococcus mutans serotype c (strain ATCC 700610 / UA159)).